Reading from the N-terminus, the 142-residue chain is Large ribosomal subunit protein uL13 (142 aa).

The protein belongs to the universal ribosomal protein uL13 family. Part of the 50S ribosomal subunit.

In terms of biological role, this protein is one of the early assembly proteins of the 50S ribosomal subunit, although it is not seen to bind rRNA by itself. It is important during the early stages of 50S assembly. The chain is Large ribosomal subunit protein uL13 from Pectobacterium carotovorum subsp. carotovorum (strain PC1).